The primary structure comprises 224 residues: Elongation factor 1-beta 2 (224 aa).

Ala2 carries the N-acetylalanine modification. Residues 14-65 enclose the GST C-terminal domain; the sequence is VKSVEEHLAGKTYISGDQLSVDDVKVYAAVPVKPSDAFPNASKWYESVASQL. The segment at 89–139 is disordered; sequence EAEAPAAAADDDDDMDLFGDETEEEKKAAEEREAAKKDTKKPKESGKSSVL. Acidic residues predominate over residues 97 to 111; that stretch reads ADDDDDMDLFGDETE. The segment covering 112–134 has biased composition (basic and acidic residues); the sequence is EEKKAAEEREAAKKDTKKPKESG.

This sequence belongs to the EF-1-beta/EF-1-delta family. EF-1 is composed of 4 subunits: alpha, beta (1B-alpha=beta'), delta (1B-beta), and gamma (1B-gamma).

In terms of biological role, EF-1-beta and EF-1-delta stimulate the exchange of GDP bound to EF-1-alpha to GTP. This Arabidopsis thaliana (Mouse-ear cress) protein is Elongation factor 1-beta 2.